The primary structure comprises 198 residues: RNA-free ribonuclease P (198 aa).

The protein belongs to the HARP family.

It carries out the reaction Endonucleolytic cleavage of RNA, removing 5'-extranucleotides from tRNA precursor.. In terms of biological role, RNA-free RNase P that catalyzes the removal of the 5'-leader sequence from pre-tRNA to produce the mature 5'-terminus. This is RNA-free ribonuclease P from Nitrosococcus oceani (strain ATCC 19707 / BCRC 17464 / JCM 30415 / NCIMB 11848 / C-107).